A 92-amino-acid polypeptide reads, in one-letter code: Conotoxin Mr15.2 (92 aa).

The first 20 residues, 1-20 (MSTLKMMLLILLLLLPMATF), serve as a signal peptide directing secretion. Positions 21–53 (DSDGQAIPGGGIPSAVNSRVGGDEKSGRSLEKR) are excised as a propeptide. The interval 30–49 (GGIPSAVNSRVGGDEKSGRS) is disordered.

The protein belongs to the conotoxin N superfamily. In terms of processing, contains 4 disulfide bonds. In terms of tissue distribution, expressed by the venom duct.

It localises to the secreted. This is Conotoxin Mr15.2 from Conus marmoreus (Marble cone).